The sequence spans 343 residues: Dihydroorotase (343 aa).

The Zn(2+) site is built by His-14 and His-16. Residues 16–18 (HLR) and Asn-42 contribute to the substrate site. Residues Lys-99, His-136, and His-174 each coordinate Zn(2+). N6-carboxylysine is present on Lys-99. His-136 is a binding site for substrate. Residue Leu-219 participates in substrate binding. Position 247 (Asp-247) interacts with Zn(2+). Asp-247 is a catalytic residue. Residues His-251 and Ala-263 each coordinate substrate.

This sequence belongs to the metallo-dependent hydrolases superfamily. DHOase family. Class II DHOase subfamily. In terms of assembly, homodimer. Requires Zn(2+) as cofactor.

The catalysed reaction is (S)-dihydroorotate + H2O = N-carbamoyl-L-aspartate + H(+). Its pathway is pyrimidine metabolism; UMP biosynthesis via de novo pathway; (S)-dihydroorotate from bicarbonate: step 3/3. Its function is as follows. Catalyzes the reversible cyclization of carbamoyl aspartate to dihydroorotate. The protein is Dihydroorotase of Psychromonas ingrahamii (strain DSM 17664 / CCUG 51855 / 37).